An 81-amino-acid polypeptide reads, in one-letter code: ATP synthase subunit c, chloroplastic (81 aa).

The next 2 membrane-spanning stretches (helical) occupy residues 7–27 (AASV…PGVG) and 57–77 (LAFM…LLFA).

The protein belongs to the ATPase C chain family. In terms of assembly, F-type ATPases have 2 components, F(1) - the catalytic core - and F(0) - the membrane proton channel. F(1) has five subunits: alpha(3), beta(3), gamma(1), delta(1), epsilon(1). F(0) has four main subunits: a(1), b(1), b'(1) and c(10-14). The alpha and beta chains form an alternating ring which encloses part of the gamma chain. F(1) is attached to F(0) by a central stalk formed by the gamma and epsilon chains, while a peripheral stalk is formed by the delta, b and b' chains.

It is found in the plastid. The protein resides in the chloroplast thylakoid membrane. F(1)F(0) ATP synthase produces ATP from ADP in the presence of a proton or sodium gradient. F-type ATPases consist of two structural domains, F(1) containing the extramembraneous catalytic core and F(0) containing the membrane proton channel, linked together by a central stalk and a peripheral stalk. During catalysis, ATP synthesis in the catalytic domain of F(1) is coupled via a rotary mechanism of the central stalk subunits to proton translocation. Functionally, key component of the F(0) channel; it plays a direct role in translocation across the membrane. A homomeric c-ring of between 10-14 subunits forms the central stalk rotor element with the F(1) delta and epsilon subunits. The protein is ATP synthase subunit c, chloroplastic of Arabis hirsuta (Hairy rock-cress).